A 1840-amino-acid polypeptide reads, in one-letter code: Neurexin 1 (1840 aa).

The tract at residues 1-50 (MKAPHSATYQDNYADAAMTARTRPSMDMDQQRNRNQAELRLLPAQRTSTS) is disordered. Residues 1–1696 (MKAPHSATYQ…NSIEEERTAM (1696 aa)) are Extracellular-facing. The span at 24 to 37 (PSMDMDQQRNRNQA) shows a compositional bias: basic and acidic residues. Residues 104-289 (GFQLDGSQNS…RDIKCGDVPC (186 aa)) enclose the Laminin G-like 1 domain. The EGF-like 1 domain maps to 309-347 (TTDACERNDPCQHGGICISTDSGPICECRNLEYDGQYCE). Intrachain disulfides connect Cys313/Cys325, Cys319/Cys334, Cys336/Cys346, Cys511/Cys547, Cys710/Cys739, Cys746/Cys757, Cys751/Cys766, and Cys768/Cys778. 2 Laminin G-like domains span residues 352–547 (PSEA…EYQC) and 554–739 (DPVT…KPSC). One can recognise an EGF-like 2 domain in the interval 742-779 (QANVCNGNPCLNGGTCLEGWNRPICDCSATLYGGPTCG). Laminin G-like domains are found at residues 784 to 964 (TLAF…LPSA) and 982 to 1158 (HAAT…VSGC). 4 disulfide bridges follow: Cys1130–Cys1158, Cys1164–Cys1175, Cys1169–Cys1184, and Cys1186–Cys1196. The 38-residue stretch at 1160-1197 (GPTKCSQNACANRGNCVQQWNAYACECDMTSYTGPTCY) folds into the EGF-like 3 domain. Positions 1201–1416 (IAYEFGNNKG…LIFSGAGSGC (216 aa)) constitute a Laminin G-like 6 domain. The segment at 1411–1651 (GAGSGCRGDD…DEHHPLPPLP (241 aa)) is disordered. A compositionally biased stretch (low complexity) spans 1447 to 1472 (QTTTSQQGNSLSTGGSSSGGVITNGT). Residues 1491 to 1527 (TTEQFTSTSTARGSESNNEMVTITTTGRSDVTTEQHQ) are compositionally biased toward polar residues. The span at 1528–1600 (GSSSSSSSGS…TTTTTTTTQA (73 aa)) shows a compositional bias: low complexity. The span at 1632 to 1646 (RNDHDRMQLPDEHHP) shows a compositional bias: basic and acidic residues. The chain crosses the membrane as a helical span at residues 1697 to 1717 (IIGIVAGILIAVVLVILLVLW). At 1718 to 1840 (LKSNGDRGYK…DSKDVKEWYV (123 aa)) the chain is on the cytoplasmic side. A disordered region spans residues 1737–1840 (GSHNPNAALL…DSKDVKEWYV (104 aa)). Polar residues predominate over residues 1747–1757 (GNTSTNGSYHQ). Positions 1774 to 1787 (QQQHHAQQQMHNGH) are enriched in low complexity. The segment covering 1788-1813 (NGNGNGGGGGGGGMMSSGSGSLGYGS) has biased composition (gly residues). The Zn(2+) site is built by Asp1831 and Asp1834. Basic and acidic residues predominate over residues 1831–1840 (DSKDVKEWYV). The short motif at 1837 to 1840 (EWYV) is the PDZ domain binding element.

It belongs to the neurexin family. Interacts (via C-terminal PDZ binding motif) with CASK (via PDZ domain). Interacts (via cytoplasmic domain) with apolpp/ApoLI; the interaction supports apolpp/ApoLI protein stability. Interact (via cytoplasmic domain) with Spn/Spinophilin. Interacts with RhoGAP100F/Syd-1 (via PDZ domain); RhoGAP100F/Syd-1 may recruit Nrx-1 to the presynaptic active zone. In terms of tissue distribution, expressed in brain, with expression in medulla, lamina, lobula, lobula plate, mushroom body and antennal lobe, and in retina (at protein level). Expressed in rabdomere of photoreceptor cells (at protein level).

It localises to the synaptic cell membrane. The protein resides in the presynaptic cell membrane. The protein localises to the postsynaptic cell membrane. Functionally, neuronal cell adhesion protein involved in synapse formation, development of synaptic active zones, synaptic regulation and visual function. Plays a role in cell adhesion between the pre- and the postsynaptic cell. Required for proper proliferation of synaptic boutons during larval development, a process necessary for coordinated matching of pre-and postsynaptic compartments. Promotes presynaptic active zone formation and neurotransmitter release. Spn/Spinophilin fine-tunes nrx-1/nlg1 signaling at the pre-synapse to control active zone number and functionality and thereby optimizing action potential-induced exocytosis. Required for synapse formation in central nervous system. By regulating synapse formation, may play a role in larval associative learning. Together with RhoGAP100F/syd-1, controls synapse formation at the neuromuscular junction. Essential for synaptic vesicle cycling, which plays critical roles in neurotransmission at neuromuscular junctions (NMJ). Regulated and restricts formation of glutamate receptor clusters. Mediates retinoid transport and subsequent rhodopsin maturation and may regulate lipoprotein function; thereby playing a role in vision. Regulates sleep, circadian rhythm and synaptic plasticity. Together with CASK, required for locomotion. This Drosophila melanogaster (Fruit fly) protein is Neurexin 1.